The sequence spans 108 residues: Tetrahydromethanopterin S-methyltransferase subunit B (108 aa).

The helical transmembrane segment at 79-99 (GMFFGFWVTMAILVLVTILAV) threads the bilayer.

Belongs to the MtrB family. In terms of assembly, the complex is composed of 8 subunits; MtrA, MtrB, MtrC, MtrD, MtrE, MtrF, MtrG and MtrH.

Its subcellular location is the cell membrane. The enzyme catalyses 5-methyl-5,6,7,8-tetrahydromethanopterin + coenzyme M + 2 Na(+)(in) = 5,6,7,8-tetrahydromethanopterin + methyl-coenzyme M + 2 Na(+)(out). It functions in the pathway one-carbon metabolism; methanogenesis from CO(2); methyl-coenzyme M from 5,10-methylene-5,6,7,8-tetrahydromethanopterin: step 2/2. Its function is as follows. Part of a complex that catalyzes the formation of methyl-coenzyme M and tetrahydromethanopterin from coenzyme M and methyl-tetrahydromethanopterin. This is an energy-conserving, sodium-ion translocating step. The polypeptide is Tetrahydromethanopterin S-methyltransferase subunit B (Methanococcus maripaludis (strain C5 / ATCC BAA-1333)).